Reading from the N-terminus, the 345-residue chain is UDP-N-acetylenolpyruvoylglucosamine reductase (345 aa).

In terms of domain architecture, FAD-binding PCMH-type spans 16 to 185 (VNAFAKSVVT…VSVGLRLCKK (170 aa)). Arg162 is a catalytic residue. The active-site Proton donor is the Ser231. Residue Glu328 is part of the active site.

Belongs to the MurB family. FAD serves as cofactor.

The protein resides in the cytoplasm. It catalyses the reaction UDP-N-acetyl-alpha-D-muramate + NADP(+) = UDP-N-acetyl-3-O-(1-carboxyvinyl)-alpha-D-glucosamine + NADPH + H(+). The protein operates within cell wall biogenesis; peptidoglycan biosynthesis. Cell wall formation. This Blochmanniella pennsylvanica (strain BPEN) protein is UDP-N-acetylenolpyruvoylglucosamine reductase.